Consider the following 232-residue polypeptide: Orotate phosphoribosyltransferase (232 aa).

Residues Arg-107, Lys-108, Lys-111, and 133 to 141 each bind 5-phospho-alpha-D-ribose 1-diphosphate; that span reads EDLTTDGGS. Thr-137 is an orotate binding site.

Belongs to the purine/pyrimidine phosphoribosyltransferase family. PyrE subfamily. Homodimer. Mg(2+) serves as cofactor.

The enzyme catalyses orotidine 5'-phosphate + diphosphate = orotate + 5-phospho-alpha-D-ribose 1-diphosphate. It participates in pyrimidine metabolism; UMP biosynthesis via de novo pathway; UMP from orotate: step 1/2. Catalyzes the transfer of a ribosyl phosphate group from 5-phosphoribose 1-diphosphate to orotate, leading to the formation of orotidine monophosphate (OMP). This chain is Orotate phosphoribosyltransferase, found in Cereibacter sphaeroides (strain KD131 / KCTC 12085) (Rhodobacter sphaeroides).